Here is a 316-residue protein sequence, read N- to C-terminus: MKTSVVILAMSYITSIFANNSYDFCDGEFAISEKDDKCGFSFNPCTLYKQIQKEYSNCVILRFYLKAISNMLESICDNNKRCLPFSIDSLYRPLYNREQFKHKHHHTLYALFRNCLYLVNPIYFKEYQDALACNQLDVCYFLIRRTVCPKYGVTKYIECLKKRCEDRFDEKELAIFICDSETFVNIKLEIDACRKICPADCTLDICKIYSLDFWERRDLLKAIFDYHYCHVLSSDNTRDEIIKKIEEIYLNGTERDIKFTSFIIYQLFTDLVACKSSDKNIKRILDLICLYEKKDKCPSGVMVMIEFFVKVCSYQC.

The first 18 residues, 1 to 18, serve as a signal peptide directing secretion; it reads MKTSVVILAMSYITSIFA. Asn19 and Asn251 each carry an N-linked (GlcNAc...) asparagine glycan.

Its subcellular location is the spore. It localises to the perispore. In Nosema bombycis (strain CQ1 / CVCC 102059) (Microsporidian parasite), this protein is Spore wall protein 30 (SWP32).